Reading from the N-terminus, the 206-residue chain is Probable GTP-binding protein EngB (206 aa).

The 174-residue stretch at 25-198 folds into the EngB-type G domain; sequence SRAEVAFAGR…AVRIEGWLAP (174 aa). The Mg(2+) site is built by Ser-40 and Thr-62.

The protein belongs to the TRAFAC class TrmE-Era-EngA-EngB-Septin-like GTPase superfamily. EngB GTPase family. Mg(2+) serves as cofactor.

Necessary for normal cell division and for the maintenance of normal septation. This Thiobacillus denitrificans (strain ATCC 25259 / T1) protein is Probable GTP-binding protein EngB.